The primary structure comprises 1125 residues: Transient receptor potential cation channel subfamily A member 1 (1125 aa).

Topologically, residues 1-721 (MKRSLRRVLR…KWCAYGFRAH (721 aa)) are cytoplasmic. 9 ANK repeats span residues 63–94 (ENLC…ALNV), 98–127 (YGNT…NPNL), 131–161 (NMMA…NINL), 165–194 (NGNT…KLCK), 198–227 (WGDY…KTGY), 239–268 (KKAS…HIDM), 272–301 (AKCM…GSSD), 309–338 (NQET…DINS), and 342–371 (EGRS…KVDI). 5 disulfides stabilise this stretch: cysteine 193–cysteine 666, cysteine 463–cysteine 666, cysteine 609–cysteine 622, cysteine 622–cysteine 666, and cysteine 634–cysteine 859. Proline 395 is subject to 4-hydroxyproline; transient. ANK repeat units lie at residues 413–442 (DGCT…SVHS), 446–475 (DKKS…DTRL), 482–511 (HGMT…LFLS), 514–543 (NGWT…KCTD), and 548–577 (EGNT…DILL). The (E)-cinnamaldehyde site is built by cysteine 415 and cysteine 422. Cysteine 622 provides a ligand contact to (E)-cinnamaldehyde. Cysteine 634 carries the cysteine sulfenic acid (-SOH); transient; in hyperoxia modification. 3 residues coordinate (E)-cinnamaldehyde: cysteine 642, cysteine 666, and lysine 712. A helical membrane pass occupies residues 722 to 742 (MMNLGSYCLGLIPMTLLVVKI). The Extracellular segment spans residues 743–767 (QPGMAFNSTGIINETISTHEERINT). 2 N-linked (GlcNAc...) asparagine glycosylation sites follow: asparagine 749 and asparagine 755. Residues 768-788 (LNSFPLKICMILVFLSSIFGY) traverse the membrane as a helical segment. At 789-806 (CKEVVQIFQQKRNYFLDY) the chain is on the cytoplasmic side. Positions 791, 794, 808, and 811 each coordinate Ca(2+). The helical transmembrane segment at 807–827 (NNALEWVIYTTSMIFVLPLFL) threads the bilayer. Residues 828 to 832 (DIPAY) lie on the Extracellular side of the membrane. Residues 833-853 (MQWQCGAIAIFFYWMNFLLYL) traverse the membrane as a helical segment. The Cytoplasmic portion of the chain corresponds to 854 to 876 (QRFENCGIFIVMLEVIFKTLLRS). Cysteine 859 bears the Cysteine sulfenic acid (-SOH); transient; in hyperoxia mark. A helical transmembrane segment spans residues 877–897 (TGVFIFLLLAFGLSFYVLLNF). Residues 898–904 (QDAFSTP) lie on the Extracellular side of the membrane. The segment at residues 905 to 925 (LLSLIQTFSMMLGDINYRDAF) is an intramembrane region (pore-forming). The Extracellular segment spans residues 926-937 (LEPLFRNELAYP). The helical transmembrane segment at 938–959 (VLTFGQLIAFTMFVPIVLMNLL) threads the bilayer. The Cytoplasmic segment spans residues 960–1125 (IGLAVGDIAE…THCSISHPDI (166 aa)). Residues 1044–1073 (MEILKQKYRLKDLTSLLEKQHELIKLIIQK) adopt a coiled-coil conformation. Position 1048–1054 (1048–1054 (KQKYRLK)) interacts with a 1,2-diacyl-sn-glycero-3-phospho-(1D-myo-inositol).

It belongs to the transient receptor (TC 1.A.4) family. In terms of assembly, homotetramer. Interacts with TMEM100. Interacts with EGLN1. Interacts with the scorpion wasabi receptor toxin at the same site that electrophiles but in a non-covalent manner. TRPA1 activation by electrophiles occurs though covalent modification of specific cysteine residues in the N-terminal cytoplasmic domain. In terms of processing, hydroxylation is required for TRPA1 activity inhibition in normoxia. In hypoxia, the decrease in oxygen concentration diminishes the activity of the hydroxylase EGLN1, thus relieving TRPA1 from inhibition and ultimately leading to channel activation. Post-translationally, oxidation of Cys-634 and Cys-859 in hyperoxia may override the hydroxylase EGLN1-mediated inhibition, causing TRPA1 activation. As to expression, specifically expressed in a subset of nociceptive neurons. Expressed in dorsal root ganglia.

It localises to the cell membrane. The enzyme catalyses Ca(2+)(in) = Ca(2+)(out). The catalysed reaction is Mg(2+)(in) = Mg(2+)(out). It catalyses the reaction Na(+)(in) = Na(+)(out). It carries out the reaction K(+)(in) = K(+)(out). The enzyme catalyses Zn(2+)(in) = Zn(2+)(out). Its activity is regulated as follows. Electrophilic ligands activate the channel by covalent modification of intracellular cysteines; Cys-622 plays a key role in covalent binding of electrophiles. Extracellular Ca(2+) both potentiates and inactivates TRPA1; a rapid potentiation follows by slow desensitization. Activated by increase in intracellular Ca(2+) concentration. Inhibited by ruthenium red, a potent blocker of TRPV channels and selectively by A-967079. Activated by benzyl isothiocyanate (BITC), iodoacetamide, sulfhydryl reactive agent MTSEA, N-methyl maleimide (NMM), N-ethylmaleimide (NEM), and 2-aminoethyldiphenylborinate (2-APB). Also activated by hyperoxia. Acivated by intracellular Zn(2+). TRPA1 activation may critically depend on the presence of small intracellular compounds such as polyphosphates. Functionally, ligand-activated Ca(2+)-permeable, nonselective cation channel. Involved in pain detection and possibly also in cold perception, oxygen concentration perception, cough, itch, and inner ear function. Has a relatively high Ca(2+) selectivity, with a preference for divalent over monovalent cations (Ca(2+) &gt; Ba(2+) &gt; Mg(2+) &gt; NH4(+) &gt; Li(+) &gt; K(+)), the influx of cation into the cytoplasm, leads to membrane depolarization. Has a central role in the pain response to endogenous inflammatory mediators, such as bradykinin and to a diverse array of irritants. Activated by a large variety of structurally unrelated electrophilic and non-electrophilic chemical compounds, such as allylthiocyanate (AITC) from mustard oil or wasabi, cinnamaldehyde, diallyl disulfide (DADS) from garlic, and acrolein, an environmental irritant. Electrophilic ligands activate TRPA1 by interacting with critical N-terminal Cys residues in a covalent manner. Non-electrophile agonists bind at distinct sites in the transmembrane domain to promote channel activation. Also acts as an ionotropic cannabinoid receptor by being activated by delta(9)-tetrahydrocannabinol (THC), the psychoactive component of marijuana. May be a component for the mechanosensitive transduction channel of hair cells in inner ear, thereby participating in the perception of sounds. This is Transient receptor potential cation channel subfamily A member 1 from Rattus norvegicus (Rat).